A 456-amino-acid polypeptide reads, in one-letter code: MDPASGVIVAQTAAGTSVVLGLMRCGRIWLCPVCAATIRHKRAEEITAAVVEWIKRGGTAYLVTFTARHGHTDRLADLMDALQGTRKTPDSPRRPGAYQRLITGGTWAGRRAKDGHRAADREGIRDRIGYVGMIRATEVTVGQINGWHPHIHAIVLVGGRTEGERSAKQIVATFEPTGAALDEWQGHWRSVWTAALRKVNPAFTPDDRHGVDFKRLETERDANDLAEYIAKTQDGKAPALELARADLKTATGGNVAPFELLGRIGDLTGGMTEDDAAGVGSLEWNLSRWHEYERATRGRRAIEWTRYLRQMLGLDGGDTEADDLDLLLAADADGGELRAGVAVTEDGWHAVTRRALDLEATRAAEGKDGNEDPAAVGERVREVLALADAADTVVVLTAGEVAEAYADMLAALAQRREEATARRRREQDDDQDDDADDRQERAARHIARLASGPTSH.

Residues 416–427 (REEATARRRREQ) show a composition bias toward basic and acidic residues. Positions 416 to 456 (REEATARRRREQDDDQDDDADDRQERAARHIARLASGPTSH) are disordered. Residues 428–437 (DDDQDDDADD) show a composition bias toward acidic residues.

This sequence belongs to the Gram-positive plasmids replication protein type 1 family.

Essential for the autonomous replication of the plasmid pIJ101. This is Protein rep (rep) from Streptomyces lividans.